Reading from the N-terminus, the 213-residue chain is Heterochromatin protein 1 (213 aa).

2 disordered regions span residues 1-24 (MGKK…EEEY) and 74-151 (RKDE…TGFD). In terms of domain architecture, Chromo 1 spans 24-82 (YAVEKILDRRVRKGKVEYYLKWKGYAETENTWEPEGNLDCQDLIQQYELSRKDEANAAA). The span at 89 to 104 (SKKERPGSSTKVKETG) shows a compositional bias: basic and acidic residues. A compositionally biased stretch (polar residues) spans 105 to 115 (RTSTTASNSSG). The region spanning 154-212 (LEAEKILGASDNNGRLTFLIQFKGVDQAEMVPSTVANVKIPQMVIRFYEERLSWYSDNE) is the Chromo 2 domain.

The protein resides in the nucleus. Its function is as follows. Structural component of heterochromatin, involved in gene repression and the modification of position-effect-variegation. Recognizes and binds histone H3 tails methylated at 'Lys-9', leading to epigenetic repression. This chain is Heterochromatin protein 1 (HP1A), found in Drosophila virilis (Fruit fly).